The chain runs to 141 residues: Putative inactive deoxyuridine 5'-triphosphate nucleotidohydrolase-like protein FLJ16323 (141 aa).

The protein belongs to the dUTPase family.

This chain is Putative inactive deoxyuridine 5'-triphosphate nucleotidohydrolase-like protein FLJ16323, found in Homo sapiens (Human).